The following is a 272-amino-acid chain: 27-O-demethylrifamycin SV methyltransferase (272 aa).

Residues Ser89, Gln94, 117–118, Leu134, and His139 each bind S-adenosyl-L-methionine; that span reads DA.

This sequence belongs to the class I-like SAM-binding methyltransferase superfamily. In terms of assembly, exists probably as a trimer.

The catalysed reaction is 27-O-demethylrifamycin SV + S-adenosyl-L-methionine = rifamycin SV + S-adenosyl-L-homocysteine + H(+). The protein operates within antibiotic biosynthesis; rifamycin B biosynthesis. Slightly inhibited by Ca(2+) and Mg(2+). Strongly inhibited by Zn(2+), Ni(2+) and Co(2+). Functionally, catalyzes the methylation of 27-O-demethylrifamycin SV (DMRSV) to rifamycin SV. The protein is 27-O-demethylrifamycin SV methyltransferase of Amycolatopsis mediterranei (strain S699) (Nocardia mediterranei).